We begin with the raw amino-acid sequence, 194 residues long: dCTP deaminase (194 aa).

DCTP contacts are provided by residues 110–115, D128, 136–138, Y171, K178, and Q182; these read RSSLAR and VLE. The active-site Proton donor/acceptor is E138.

Belongs to the dCTP deaminase family. As to quaternary structure, homotrimer.

It carries out the reaction dCTP + H2O + H(+) = dUTP + NH4(+). Its pathway is pyrimidine metabolism; dUMP biosynthesis; dUMP from dCTP (dUTP route): step 1/2. Its function is as follows. Catalyzes the deamination of dCTP to dUTP. The polypeptide is dCTP deaminase (Pseudoalteromonas translucida (strain TAC 125)).